We begin with the raw amino-acid sequence, 324 residues long: UPF0158 protein CPn_0518/CP_0235/CPj0518/CpB0539 (324 aa).

This sequence belongs to the UPF0158 family.

In Chlamydia pneumoniae (Chlamydophila pneumoniae), this protein is UPF0158 protein CPn_0518/CP_0235/CPj0518/CpB0539.